Reading from the N-terminus, the 454-residue chain is tRNA modification GTPase MnmE (454 aa).

Positions 23, 80, and 120 each coordinate (6S)-5-formyl-5,6,7,8-tetrahydrofolate. The 162-residue stretch at Gly-216–Gly-377 folds into the TrmE-type G domain. Asn-226 provides a ligand contact to K(+). GTP contacts are provided by residues Asn-226–Ser-231, Thr-245–Thr-251, Asp-270–Gly-273, Asn-335–Asp-338, and Ser-358–Arg-360. Ser-230 contributes to the Mg(2+) binding site. K(+) contacts are provided by Thr-245, Ile-247, and Thr-250. Position 251 (Thr-251) interacts with Mg(2+). Lys-454 is a (6S)-5-formyl-5,6,7,8-tetrahydrofolate binding site.

It belongs to the TRAFAC class TrmE-Era-EngA-EngB-Septin-like GTPase superfamily. TrmE GTPase family. As to quaternary structure, homodimer. Heterotetramer of two MnmE and two MnmG subunits. The cofactor is K(+).

The protein resides in the cytoplasm. Exhibits a very high intrinsic GTPase hydrolysis rate. Involved in the addition of a carboxymethylaminomethyl (cmnm) group at the wobble position (U34) of certain tRNAs, forming tRNA-cmnm(5)s(2)U34. This chain is tRNA modification GTPase MnmE, found in Salmonella paratyphi A (strain AKU_12601).